Here is a 276-residue protein sequence, read N- to C-terminus: F420-dependent methylenetetrahydromethanopterin dehydrogenase (276 aa).

It belongs to the MTD family.

The catalysed reaction is 5,10-methylenetetrahydromethanopterin + oxidized coenzyme F420-(gamma-L-Glu)(n) + 2 H(+) = 5,10-methenyl-5,6,7,8-tetrahydromethanopterin + reduced coenzyme F420-(gamma-L-Glu)(n). It participates in one-carbon metabolism; methanogenesis from CO(2); 5,10-methylene-5,6,7,8-tetrahydromethanopterin from 5,10-methenyl-5,6,7,8-tetrahydromethanopterin (coenzyme F420 route): step 1/1. In terms of biological role, catalyzes the reversible reduction of methenyl-H(4)MPT(+) to methylene-H(4)MPT. The protein is F420-dependent methylenetetrahydromethanopterin dehydrogenase of Methanococcus vannielii (strain ATCC 35089 / DSM 1224 / JCM 13029 / OCM 148 / SB).